The sequence spans 266 residues: Dihydropteroate synthase (266 aa).

Residues 12 to 260 (AAIMGILNVT…DVKANQDIVA (249 aa)) enclose the Pterin-binding domain. A Mg(2+)-binding site is contributed by Asn-19. Residues Thr-59, Asp-93, Asn-112, Asp-176, Lys-212, and 248–250 (RVH) contribute to the (7,8-dihydropterin-6-yl)methyl diphosphate site.

This sequence belongs to the DHPS family. As to quaternary structure, homodimer or homotrimer. The cofactor is Mg(2+).

It catalyses the reaction (7,8-dihydropterin-6-yl)methyl diphosphate + 4-aminobenzoate = 7,8-dihydropteroate + diphosphate. The protein operates within cofactor biosynthesis; tetrahydrofolate biosynthesis; 7,8-dihydrofolate from 2-amino-4-hydroxy-6-hydroxymethyl-7,8-dihydropteridine diphosphate and 4-aminobenzoate: step 1/2. Catalyzes the condensation of para-aminobenzoate (pABA) with 6-hydroxymethyl-7,8-dihydropterin diphosphate (DHPt-PP) to form 7,8-dihydropteroate (H2Pte), the immediate precursor of folate derivatives. This chain is Dihydropteroate synthase (folP), found in Streptococcus pyogenes serotype M6 (strain ATCC BAA-946 / MGAS10394).